The sequence spans 253 residues: Uroplakin-3b-like protein 1 (253 aa).

The first 26 residues, 1–26, serve as a signal peptide directing secretion; sequence MGLGRGQSPLLMALLLLLACLQMGMS. The Extracellular segment spans residues 27 to 194; that stretch reads LERISYVPQL…PGPQTAGTVV (168 aa). Asn78 and Asn130 each carry an N-linked (GlcNAc...) asparagine glycan. Residues 195-215 form a helical membrane-spanning segment; sequence IIAILSVLLAVLLAALLALLI. The Cytoplasmic segment spans residues 216-253; it reads FTWYDTCGSTPISGPGELVFVRKYDTHHMSRPSTVGGS.

This sequence belongs to the uroplakin-3 family.

The protein localises to the membrane. The polypeptide is Uroplakin-3b-like protein 1 (Bos taurus (Bovine)).